The sequence spans 325 residues: UPF0285 protein MmarC7_1666 (325 aa).

It belongs to the UPF0285 family.

This chain is UPF0285 protein MmarC7_1666, found in Methanococcus maripaludis (strain C7 / ATCC BAA-1331).